The chain runs to 521 residues: Zinc finger and BTB domain-containing protein 18 (521 aa).

The BTB domain occupies 24–91; the sequence is CDCTVLVGDA…MYEGKLQFKD (68 aa). Residues 190 to 230 are disordered; the sequence is DSASIPQTGGEAETHTAAAGKTADSPCSSTGSLSHRSATSM. The span at 197-212 shows a compositional bias: low complexity; it reads TGGEAETHTAAAGKTA. Residues 214–230 are compositionally biased toward polar residues; sequence SPCSSTGSLSHRSATSM. 4 C2H2-type zinc fingers span residues 369–391, 409–431, 437–459, and 465–488; these read FMCPLCNKVFPSPHILQIHLSTH, PTCSLCGKTFSCMYTLKRHERTH, FTCTQCGKSFQYSHNLSRHAVVH, and HACKWCERRFTQSGDLYRHIRKFH.

It belongs to the krueppel C2H2-type zinc-finger protein family. ZBTB18 subfamily.

The protein localises to the nucleus. Transcriptional repressor that plays a role in various developmental processes. Specifically binds the consensus DNA sequence 5'-[AC]ACATCTG[GT][AC]-3' which contains the E box core, and acts by recruiting chromatin remodeling multiprotein complexes. This Xenopus tropicalis (Western clawed frog) protein is Zinc finger and BTB domain-containing protein 18 (zbtb18).